We begin with the raw amino-acid sequence, 159 residues long: Transcriptional repressor NrdR (159 aa).

Residues 3–34 fold into a zinc finger; the sequence is CPYCQSEDTQVKDSRPAEDGAAIRRRRVCPDC. The region spanning 49–139 is the ATP-cone domain; that stretch reads LVVVKKSGRK…VYRNFREAKD (91 aa).

It belongs to the NrdR family. It depends on Zn(2+) as a cofactor.

Negatively regulates transcription of bacterial ribonucleotide reductase nrd genes and operons by binding to NrdR-boxes. The polypeptide is Transcriptional repressor NrdR (Mesorhizobium japonicum (strain LMG 29417 / CECT 9101 / MAFF 303099) (Mesorhizobium loti (strain MAFF 303099))).